The sequence spans 712 residues: Cyclolysin secretion/processing ATP-binding protein CyaB (712 aa).

One can recognise a Peptidase C39 domain in the interval 7–128; sequence QCASVPDSGL…ALWAGELLLC (122 aa). Residues 157–439 enclose the ABC transmembrane type-1 domain; that stretch reads IGEVLLISLV…LAQLWNDFQQ (283 aa). A run of 6 helical transmembrane segments spans residues 160-180, 194-214, 272-292, 298-318, 367-387, and 390-410; these read VLLI…FFQV, LNVI…LTGI, AVTV…MFFY, LVVL…TPVL, VAAG…VTLI, and LVAL…RMTV. The ABC transporter domain occupies 471–706; it reads IELDRVSFRY…GGLYARLQAL (236 aa). 505–512 contacts ATP; that stretch reads GRSGSGKS.

Belongs to the ABC transporter superfamily. Cyclolysin exporter (TC 3.A.1.109.2) family.

It is found in the cell membrane. Its function is as follows. Involved in the export of calmodulin-sensitive adenylate cyclase-hemolysin (cyclolysin). The protein is Cyclolysin secretion/processing ATP-binding protein CyaB (cyaB) of Bordetella pertussis (strain Tohama I / ATCC BAA-589 / NCTC 13251).